The sequence spans 450 residues: ATP-dependent protease ATPase subunit HslU (450 aa).

Residues V29, G71–E76, D261, E328, and R400 each bind ATP.

The protein belongs to the ClpX chaperone family. HslU subfamily. As to quaternary structure, a double ring-shaped homohexamer of HslV is capped on each side by a ring-shaped HslU homohexamer. The assembly of the HslU/HslV complex is dependent on binding of ATP.

It localises to the cytoplasm. Functionally, ATPase subunit of a proteasome-like degradation complex; this subunit has chaperone activity. The binding of ATP and its subsequent hydrolysis by HslU are essential for unfolding of protein substrates subsequently hydrolyzed by HslV. HslU recognizes the N-terminal part of its protein substrates and unfolds these before they are guided to HslV for hydrolysis. The chain is ATP-dependent protease ATPase subunit HslU from Rickettsia prowazekii (strain Madrid E).